Here is a 324-residue protein sequence, read N- to C-terminus: MTATITLSTGQRMPTVGLGTWKSAPGQVKQAVLAALDCGYRHIDCAAAYSNEREVGEALTERLGPGKSLRRDDIFVTSKLWNTKHHPDDVEEACRRSLSDLRLSYLDLYLIHWPMAFGRGDELIPRHPDGTIQYDDTHYRDTWAAMEKLVDQGLAKAIGLSNFNAKQIDDILSIAKHKPVVNQVECHPYLVQAELVSHCWSRNLTVTAYSPLGSPDRPWVTPGEALLLDDPRVVGIAKSYNKTPAQVIIRWHIQRGVVCIPKSVTPSRIKQNIEVFDFKLSDEDMRLIESFNRNERFIIPTVIKDGQKIWRDAKHPHFPFIEPY.

Residues 10 to 19, Thr-20, Trp-21, and Asp-44 contribute to the NADP(+) site; that span reads GQRMPTVGLG. Tyr-49 acts as the Proton donor in catalysis. Positions 161, 162, 210, 212, 214, 262, 263, 264, 265, 268, 271, and 272 each coordinate NADP(+).

It belongs to the aldo/keto reductase family.

It localises to the cytoplasm. Its subcellular location is the cytosol. The protein resides in the apical cell membrane. It carries out the reaction a primary alcohol + NADP(+) = an aldehyde + NADPH + H(+). It catalyses the reaction S-nitroso-CoA + NADPH + H(+) = sulfinamide-CoA + NADP(+). The enzyme catalyses S-nitrosoglutathione + NADPH + H(+) = S-(hydroxysulfenamide)glutathione + NADP(+). Catalyzes the NADPH-dependent reduction of a wide variety of carbonyl-containing compounds to their corresponding alcohols. Displays enzymatic activity towards endogenous metabolites such as aromatic and aliphatic aldehydes, ketones, monosaccharides and bile acids. Acts as an aldehyde-detoxification enzyme. Also acts as an inhibitor of protein S-nitrosylation by mediating degradation of S-nitroso-coenzyme A (S-nitroso-CoA), a cofactor required to S-nitrosylate proteins. Also acts as a S-nitroso-glutathione reductase by catalyzing the NADPH-dependent reduction of S-nitrosoglutathione. Displays no reductase activity towards retinoids. The protein is Aldo-keto reductase family 1 member A1-A (akr1a1a) of Danio rerio (Zebrafish).